A 232-amino-acid chain; its full sequence is MTKHGKRIRGIQETYDLAKSYSLGEAIDILKQCPTVRFDQTVDVSVKLGIDPRKSDQQIRGSVSLPHGTGKVLRILVFAAGDKAAEAIEAGADFVGSDDLVEKIKGGWVDFDVAVATPDMMREVGKLGKVLGPRNLMPTPKAGTVTTDVVKTIAELRKGKIEFKADRAGVCNVGVAKLSFDSAQIKENVEALCAALVKAKPATAKGQYLVNFTISSTMGPGVTVDTRELIAL.

Belongs to the universal ribosomal protein uL1 family. As to quaternary structure, part of the 50S ribosomal subunit.

Binds directly to 23S rRNA. The L1 stalk is quite mobile in the ribosome, and is involved in E site tRNA release. In terms of biological role, protein L1 is also a translational repressor protein, it controls the translation of the L11 operon by binding to its mRNA. In Chlamydia trachomatis serovar L2 (strain ATCC VR-902B / DSM 19102 / 434/Bu), this protein is Large ribosomal subunit protein uL1.